A 387-amino-acid polypeptide reads, in one-letter code: Diels-Alderase ORF3 (387 aa).

This sequence belongs to the Diels-Alderase family.

The protein operates within secondary metabolite biosynthesis. In terms of biological role, diels-Alderase; part of the gene cluster that mediates the biosynthesis of a tyrosine-derived cytochalasan acting as a fungal signal recognized by resistant rice plants and leads to avirulence in Pi33 resistant rice cultivars. The first step in the pathway is catalyzed by the hybrid PKS-NRPS ACE1, assisted by the enoyl reductase RAP1, that are responsible for fusion of the tyrosine precursor and the polyketide backbone. The polyketide synthase module (PKS) of ACE1 is responsible for the synthesis of the polyketide backbone and the downstream nonribosomal peptide synthetase (NRPS) amidates the carboxyl end of the polyketide with the tyrosine precursor. Because ACE1 lacks a designated enoylreductase (ER) domain, the required activity is provided the enoyl reductase RAP1. Reduction by the hydrolyase ORFZ, followed by dehydration and intra-molecular Diels-Alder cyclization by the Diels-Alderase ORF3 then yield the required isoindolone-fused macrocycle. A number of oxidative steps catalyzed by the tailoring enzymes identified within the cluster, including cytochrome P450 monooxygenases CYP1 to CYP4, the FAD-linked oxidoreductase OXR2 and the short-chain dehydrogenase/reductase OXR1, are further required to afford the final cytochalasans that confer avirulence and which have still to be identified. The monooxygenase CYP1 has been shown to be a site-selective C-18 hydroxylase whereas the function of CYP3 is the site-selective epoxidation of the C-6/C-7 olefin that is present in some intermediate compounds. Finally, SYN2 and RAP2 are not required for avirulence in Pi33 resistant rice cultivars. This Pyricularia oryzae (strain 70-15 / ATCC MYA-4617 / FGSC 8958) (Rice blast fungus) protein is Diels-Alderase ORF3.